A 322-amino-acid polypeptide reads, in one-letter code: MVTVLNTVNQSGRLRHPEKAHRPDNEVLKKPDWIRVKAPVSRGYGETREIVRSNKLVTVCEEAGCPNIGECWEKKHATFMIMGEICTRACAFCNISTGIPNALDPNEPENIAKAVKQMGLTHVVITSVDRDDLADGGAHHFAEVIKAVREAAPATTIEILTPDFLRKEGALEIVVKARPDVFNHNLETVPSKYLKVRPGARYFHSIRLLQRVKELDPTIFTKSGIMVGLGEERNEILQLMDDLRSADVDFMTIGQYLQPTRKHHPVIRFVKPDEFKSFETIGKTKGFLLVASSPLTRSSHHAGEDFAKLKAAREALYASRAS.

A compositionally biased stretch (polar residues) spans 1 to 12; the sequence is MVTVLNTVNQSG. Positions 1 to 22 are disordered; it reads MVTVLNTVNQSGRLRHPEKAHR. [4Fe-4S] cluster is bound by residues Cys-60, Cys-65, Cys-71, Cys-86, Cys-90, Cys-93, and Ser-299. The Radical SAM core domain occupies 72 to 288; the sequence is WEKKHATFMI…ETIGKTKGFL (217 aa).

The protein belongs to the radical SAM superfamily. Lipoyl synthase family. Requires [4Fe-4S] cluster as cofactor.

Its subcellular location is the cytoplasm. The enzyme catalyses [[Fe-S] cluster scaffold protein carrying a second [4Fe-4S](2+) cluster] + N(6)-octanoyl-L-lysyl-[protein] + 2 oxidized [2Fe-2S]-[ferredoxin] + 2 S-adenosyl-L-methionine + 4 H(+) = [[Fe-S] cluster scaffold protein] + N(6)-[(R)-dihydrolipoyl]-L-lysyl-[protein] + 4 Fe(3+) + 2 hydrogen sulfide + 2 5'-deoxyadenosine + 2 L-methionine + 2 reduced [2Fe-2S]-[ferredoxin]. The protein operates within protein modification; protein lipoylation via endogenous pathway; protein N(6)-(lipoyl)lysine from octanoyl-[acyl-carrier-protein]: step 2/2. Its function is as follows. Catalyzes the radical-mediated insertion of two sulfur atoms into the C-6 and C-8 positions of the octanoyl moiety bound to the lipoyl domains of lipoate-dependent enzymes, thereby converting the octanoylated domains into lipoylated derivatives. The chain is Lipoyl synthase from Brucella abortus (strain S19).